A 525-amino-acid chain; its full sequence is Averantin hydroxylase (525 aa).

Residues 36–56 form a helical membrane-spanning segment; the sequence is VLATFVAGIGALLLWTLTTVF. Asn-315 carries an N-linked (GlcNAc...) asparagine glycan. Cys-462 lines the heme pocket.

This sequence belongs to the cytochrome P450 family. The cofactor is heme.

The protein resides in the membrane. The catalysed reaction is (1'S)-averantin + reduced [NADPH--hemoprotein reductase] + O2 = (1'S,5'R)-5'-hydroxyaverantin + oxidized [NADPH--hemoprotein reductase] + H2O. It catalyses the reaction (1'S)-averantin + reduced [NADPH--hemoprotein reductase] + O2 = (1'S,5'S)-5'-hydroxyaverantin + oxidized [NADPH--hemoprotein reductase] + H2O + H(+). It functions in the pathway mycotoxin biosynthesis. Functionally, averantin hydroxylase; part of the fragmented gene cluster that mediates the biosynthesis of dothistromin (DOTH), a polyketide toxin very similar in structure to the aflatoxin precursor, versicolorin B. The first step of the pathway is the conversion of acetate to norsolorinic acid (NOR) and requires the fatty acid synthase subunits hexA and hexB, as well as the polyketide synthase pksA. PksA combines a hexanoyl starter unit and 7 malonyl-CoA extender units to synthesize the precursor NOR. The hexanoyl starter unit is provided to the acyl-carrier protein (ACP) domain by the fungal fatty acid synthase hexA/hexB. The second step is the conversion of NOR to averantin (AVN) and requires the norsolorinic acid ketoreductase nor1, which catalyzes the dehydration of norsolorinic acid to form (1'S)-averantin. The cytochrome P450 monooxygenase avnA then catalyzes the hydroxylation of AVN to 5'hydroxyaverantin (HAVN). The next step is performed by adhA that transforms HAVN to averufin (AVF). Averufin might then be converted to hydroxyversicolorone by cypX and avfA. Hydroxyversicolorone is further converted versiconal hemiacetal acetate (VHA) by moxY. VHA is then the substrate for the versiconal hemiacetal acetate esterase est1 to yield versiconal (VAL). Versicolorin B synthase vbsA then converts VAL to versicolorin B (VERB) by closing the bisfuran ring. Then, the activity of the versicolorin B desaturase verB leads to versicolorin A (VERA). DotB, a predicted chloroperoxidase, may perform epoxidation of the A-ring of VERA. Alternatively, a cytochrome P450, such as cypX or avnA could catalyze this step. It is also possible that another, uncharacterized, cytochrome P450 enzyme is responsible for this step. Opening of the epoxide could potentially be achieved by the epoxide hydrolase epoA. However, epoA seems not to be required for DOTH biosynthesis, but other epoxide hydrolases may have the ability to complement this hydrolysis. Alternatively, opening of the epoxide ring could be achieved non-enzymatically. The next step is the deoxygenation of ring A to yield the 5,8-dihydroxyanthraquinone which is most likely catalyzed by the NADPH dehydrogenase encoded by ver1. The last stages of DOTH biosynthesis are proposed to involve hydroxylation of the bisfuran. OrdB and norB might have oxidative roles here. An alternative possibility is that cytochrome P450 monoogenases such as avnA and cypX might perform these steps in addition to previously proposed steps. The sequence is that of Averantin hydroxylase from Dothistroma septosporum (strain NZE10 / CBS 128990) (Red band needle blight fungus).